Reading from the N-terminus, the 55-residue chain is Large ribosomal subunit protein bL33 (55 aa).

It belongs to the bacterial ribosomal protein bL33 family.

The chain is Large ribosomal subunit protein bL33 from Aliivibrio salmonicida (strain LFI1238) (Vibrio salmonicida (strain LFI1238)).